Here is a 76-residue protein sequence, read N- to C-terminus: Protein sprouty homolog 1 (76 aa).

The SPR domain maps to Asn-1 to Cys-52.

It belongs to the sprouty family. Brain and interlimb region.

Its subcellular location is the cytoplasm. It localises to the membrane. Functionally, inhibits fibroblast growth factor (FGF)-induced retinal lens fiber differentiation. Inhibits TGFB-induced epithelial-to-mesenchymal transition in lens epithelial cells. This is Protein sprouty homolog 1 (SPRY1) from Gallus gallus (Chicken).